We begin with the raw amino-acid sequence, 432 residues long: Ornithine decarboxylase, chloroplastic (432 aa).

K95 is modified (N6-(pyridoxal phosphate)lysine). Pyridoxal 5'-phosphate-binding positions include S227, G265, and E298 to R301. Y341–D342 is a substrate binding site. C377 serves as the catalytic Proton donor; shared with dimeric partner. Position 378 (D378) interacts with substrate. Residue Y406 participates in pyridoxal 5'-phosphate binding.

This sequence belongs to the Orn/Lys/Arg decarboxylase class-II family. As to quaternary structure, homodimer. Only the dimer is catalytically active, as the active sites are constructed of residues from both monomers. Pyridoxal 5'-phosphate is required as a cofactor.

The protein resides in the plastid. It is found in the chloroplast. It catalyses the reaction L-lysine + H(+) = cadaverine + CO2. The catalysed reaction is L-ornithine + H(+) = putrescine + CO2. The protein operates within alkaloid biosynthesis; nicotine biosynthesis. Its pathway is amine and polyamine biosynthesis; putrescine biosynthesis via L-ornithine pathway; putrescine from L-ornithine: step 1/1. With respect to regulation, repressed by alpha-difluoromethylornithine (DFMO), 5,5'-dithiobis-(2-nitrobenzoic acid) (DTNB) and salicylaldehyde. Functionally, involved in the biosynthesis of pyridine alkaloid natural products, leading mainly to the production of anabasine, anatabine, nicotine and nornicotine, effective deterrents against herbivores with antiparasitic and pesticide properties (neurotoxins); nornicotine serves as the precursor in the synthesis of the carcinogen compound N'-nitrosonornicotine (NNN). Catalyzes the first and rate-limiting step of polyamine biosynthesis that converts ornithine into putrescine, which is the precursor for the polyamines, spermidine and spermine. Can also use, with a lower efficiency, L-lysine as substrate to produce cadaverine. Polyamines are essential for cell proliferation and are implicated in cellular processes, ranging from DNA replication to apoptosis. This is Ornithine decarboxylase, chloroplastic from Nicotiana glutinosa (Tobacco).